We begin with the raw amino-acid sequence, 40 residues long: Photosystem II reaction center protein L (40 aa).

A helical transmembrane segment spans residues 19–39 (SLYWGLLLIFVLAVLFSNYFF).

The protein belongs to the PsbL family. In terms of assembly, PSII is composed of 1 copy each of membrane proteins PsbA, PsbB, PsbC, PsbD, PsbE, PsbF, PsbH, PsbI, PsbJ, PsbK, PsbL, PsbM, PsbT, PsbX, PsbY, PsbZ, Psb30/Ycf12, at least 3 peripheral proteins of the oxygen-evolving complex and a large number of cofactors. It forms dimeric complexes.

The protein resides in the plastid. It is found in the chloroplast thylakoid membrane. Functionally, one of the components of the core complex of photosystem II (PSII). PSII is a light-driven water:plastoquinone oxidoreductase that uses light energy to abstract electrons from H(2)O, generating O(2) and a proton gradient subsequently used for ATP formation. It consists of a core antenna complex that captures photons, and an electron transfer chain that converts photonic excitation into a charge separation. This subunit is found at the monomer-monomer interface and is required for correct PSII assembly and/or dimerization. The protein is Photosystem II reaction center protein L of Nandina domestica (Heavenly bamboo).